We begin with the raw amino-acid sequence, 151 residues long: Putative coiled-coil-helix-coiled-coil-helix domain-containing protein CHCHD2P9, mitochondrial (151 aa).

The N-terminal 9 residues, 1–9 (MPRGSRSRT), are a transit peptide targeting the mitochondrion. 2 disordered regions span residues 1-50 (MPRG…AAAP) and 75-110 (TQGHAVTGGFSGGSNAEPARPDIAYQEPQGTQPAQQ). Residues 10–26 (SRMAPPASRAPQMRAAP) show a composition bias toward low complexity. Residues 27 to 38 (RPAPVAQPPAAA) show a composition bias toward pro residues. 2 stretches are compositionally biased toward low complexity: residues 39–50 (PPSAVGSSAAAP) and 100–110 (QEPQGTQPAQQ). One can recognise a CHCH domain in the interval 111-151 (QQPCFYGIKQFLECAQNQGDIKLCEDFSKVLKQCRLAKGLA). 2 consecutive short sequence motifs (cx9C motif) follow at residues 114–124 (CFYGIKQFLEC) and 134–144 (CEDFSKVLKQC). 2 cysteine pairs are disulfide-bonded: cysteine 114–cysteine 144 and cysteine 124–cysteine 134.

Its subcellular location is the mitochondrion. The sequence is that of Putative coiled-coil-helix-coiled-coil-helix domain-containing protein CHCHD2P9, mitochondrial (CHCHD2P9) from Homo sapiens (Human).